The chain runs to 92 residues: Small ribosomal subunit protein uS19 (92 aa).

The protein belongs to the universal ribosomal protein uS19 family.

Functionally, protein S19 forms a complex with S13 that binds strongly to the 16S ribosomal RNA. The polypeptide is Small ribosomal subunit protein uS19 (Photorhabdus laumondii subsp. laumondii (strain DSM 15139 / CIP 105565 / TT01) (Photorhabdus luminescens subsp. laumondii)).